The chain runs to 339 residues: 2-deoxy-scyllo-inosamine dehydrogenase (339 aa).

7 residues coordinate Zn(2+): Cys-37, His-59, Cys-88, Cys-91, Cys-94, Cys-102, and Glu-143.

The protein belongs to the zinc-containing alcohol dehydrogenase family. DOIA dehydrogenase subfamily. Zn(2+) is required as a cofactor.

The enzyme catalyses 2-deoxy-scyllo-inosamine + NADP(+) = 3-amino-2,3-dideoxy-scyllo-inosose + NADPH + H(+). It catalyses the reaction 2-deoxy-scyllo-inosamine + NAD(+) = 3-amino-2,3-dideoxy-scyllo-inosose + NADH + H(+). It participates in metabolic intermediate biosynthesis; 2-deoxystreptamine biosynthesis; 2-deoxystreptamine from D-glucose 6-phosphate: step 3/4. The protein operates within antibiotic biosynthesis; paromomycin biosynthesis. Catalyzes the oxidation of 2-deoxy-scyllo-inosamine (DOIA) with NAD(+) or NADP(+), forming 3-amino-2,3-dideoxy-scyllo-inosose (amino-DOI). This Streptomyces paromomycinus (Streptomyces rimosus subsp. paromomycinus) protein is 2-deoxy-scyllo-inosamine dehydrogenase (parE).